A 488-amino-acid polypeptide reads, in one-letter code: ATP synthase subunit beta (488 aa).

164–171 provides a ligand contact to ATP; sequence GGAGVGKT.

This sequence belongs to the ATPase alpha/beta chains family. In terms of assembly, F-type ATPases have 2 components, CF(1) - the catalytic core - and CF(0) - the membrane proton channel. CF(1) has five subunits: alpha(3), beta(3), gamma(1), delta(1), epsilon(1). CF(0) has four main subunits: a(1), b(1), b'(1) and c(9-12).

It is found in the cellular thylakoid membrane. The enzyme catalyses ATP + H2O + 4 H(+)(in) = ADP + phosphate + 5 H(+)(out). Functionally, produces ATP from ADP in the presence of a proton gradient across the membrane. The catalytic sites are hosted primarily by the beta subunits. In Prochlorococcus marinus (strain NATL1A), this protein is ATP synthase subunit beta.